The primary structure comprises 463 residues: Quinolone resistance protein NorB (463 aa).

The next 14 membrane-spanning stretches (helical) occupy residues 17-37 (IGIV…VNVV), 53-73 (IAVS…GGLA), 86-106 (IILN…LLLI), 107-127 (IGRL…LSII), 142-162 (YWSI…GAVA), 165-185 (LGWR…LFLI), 201-221 (FDIK…ILIT), 230-250 (SLLF…FIVL), 273-293 (TASN…NTFV), 299-319 (YSSL…LIMI), 334-354 (PMLI…LTFL), 357-377 (ILYV…LGIY), 403-423 (MASA…YAIV), and 435-455 (IALW…LLLV).

It belongs to the major facilitator superfamily. TCR/Tet family.

It is found in the cell membrane. In terms of biological role, multidrug efflux pump that acts independently of NorA and is one of the factors that confers resistance against diverse quinolones and chemical compounds. The polypeptide is Quinolone resistance protein NorB (norB) (Staphylococcus aureus (strain Mu3 / ATCC 700698)).